Reading from the N-terminus, the 445-residue chain is tRNA modification GTPase MnmE (445 aa).

3 residues coordinate (6S)-5-formyl-5,6,7,8-tetrahydrofolate: arginine 20, glutamate 79, and lysine 119. In terms of domain architecture, TrmE-type G spans 215–371 (GLKLAIIGPP…ILKNIENIAE (157 aa)). Asparagine 225 is a binding site for K(+). Residues 225–230 (NVGKSS), 244–250 (SNIAGTT), and 269–272 (DTAG) contribute to the GTP site. Mg(2+) is bound at residue serine 229. K(+) contacts are provided by serine 244, isoleucine 246, and threonine 249. Residue threonine 250 participates in Mg(2+) binding. Lysine 445 provides a ligand contact to (6S)-5-formyl-5,6,7,8-tetrahydrofolate.

Belongs to the TRAFAC class TrmE-Era-EngA-EngB-Septin-like GTPase superfamily. TrmE GTPase family. As to quaternary structure, homodimer. Heterotetramer of two MnmE and two MnmG subunits. K(+) is required as a cofactor.

The protein resides in the cytoplasm. Its function is as follows. Exhibits a very high intrinsic GTPase hydrolysis rate. Involved in the addition of a carboxymethylaminomethyl (cmnm) group at the wobble position (U34) of certain tRNAs, forming tRNA-cmnm(5)s(2)U34. The polypeptide is tRNA modification GTPase MnmE (Rickettsia rickettsii (strain Iowa)).